Here is a 225-residue protein sequence, read N- to C-terminus: 2-amino-5-formylamino-6-ribosylaminopyrimidin-4(3H)-one 5'-monophosphate deformylase (225 aa).

4 residues coordinate Fe cation: Glu-28, His-30, Asp-39, and His-107.

The protein belongs to the creatininase superfamily. FAPy deformylase family. Homodimer. It depends on Fe(2+) as a cofactor. Zn(2+) serves as cofactor.

It catalyses the reaction 2-amino-5-formylamino-6-(5-phospho-D-ribosylamino)pyrimidin-4(3H)-one + H2O = 2,5-diamino-6-(1-D-ribosylamino)pyrimidin-4(3H)-one 5'-phosphate + formate + H(+). Its pathway is cofactor biosynthesis; coenzyme F420 biosynthesis. The protein operates within cofactor biosynthesis; riboflavin biosynthesis. Functionally, catalyzes the hydrolysis of the formamide of 2-amino-5-formylamino-6-ribosylamino-4(3H)-pyrimidinone 5'-monophosphate (FAPy) to form 2,5-diamino-6-ribosylamino-4(3H)-pyrimidinone 5'-phosphate (APy). The protein is 2-amino-5-formylamino-6-ribosylaminopyrimidin-4(3H)-one 5'-monophosphate deformylase of Methanocaldococcus fervens (strain DSM 4213 / JCM 15782 / AG86) (Methanococcus fervens).